A 140-amino-acid polypeptide reads, in one-letter code: ATP synthase epsilon chain (140 aa).

The protein belongs to the ATPase epsilon chain family. As to quaternary structure, F-type ATPases have 2 components, CF(1) - the catalytic core - and CF(0) - the membrane proton channel. CF(1) has five subunits: alpha(3), beta(3), gamma(1), delta(1), epsilon(1). CF(0) has three main subunits: a, b and c.

It is found in the cell inner membrane. In terms of biological role, produces ATP from ADP in the presence of a proton gradient across the membrane. The polypeptide is ATP synthase epsilon chain (Yersinia pseudotuberculosis serotype O:1b (strain IP 31758)).